The sequence spans 734 residues: Photosystem I P700 chlorophyll a apoprotein A2 (734 aa).

8 helical membrane-spanning segments follow: residues 46 to 69, 135 to 158, 175 to 199, 273 to 291, 330 to 353, 369 to 395, 417 to 439, and 517 to 535; these read IFASHFGHLAIIFLWTSGNLFHVA, LYSGALFLLVLSALLLFGGWLHLQ, LNHHLSGLFGVSSLARTGHLVHVAI, MAHHHLAIAVVFIVAGHMY, LHIQLGLALASLGVITSLVAQHMY, ASLYTHHQYIAGFLMVGAFAHGAIFFV, AIISHLSWVTLFLGFHTLGLYVH, and FLVHHAIALGLHTTTLILV. [4Fe-4S] cluster-binding residues include Cys559 and Cys568. 2 helical membrane passes run 575–596 and 643–665; these read AFYLAVFWMLNTIGWVTFYWHW and LSVWSWMFLFGHLVWATGFMFLI. 3 residues coordinate chlorophyll a: His654, Met662, and Tyr670. Trp671 contacts phylloquinone. The helical transmembrane segment at 707–727 threads the bilayer; that stretch reads LVGLAHFSVGYVLTYAAFVLA.

This sequence belongs to the PsaA/PsaB family. The PsaA/B heterodimer binds the P700 chlorophyll special pair and subsequent electron acceptors. PSI consists of a core antenna complex that captures photons, and an electron transfer chain that converts photonic excitation into a charge separation. The eukaryotic PSI reaction center is composed of at least 11 subunits. The cofactor is P700 is a chlorophyll a/chlorophyll a' dimer, A0 is one or more chlorophyll a, A1 is one or both phylloquinones and FX is a shared 4Fe-4S iron-sulfur center..

The protein resides in the plastid. It localises to the chloroplast thylakoid membrane. The enzyme catalyses reduced [plastocyanin] + hnu + oxidized [2Fe-2S]-[ferredoxin] = oxidized [plastocyanin] + reduced [2Fe-2S]-[ferredoxin]. In terms of biological role, psaA and PsaB bind P700, the primary electron donor of photosystem I (PSI), as well as the electron acceptors A0, A1 and FX. PSI is a plastocyanin/cytochrome c6-ferredoxin oxidoreductase, converting photonic excitation into a charge separation, which transfers an electron from the donor P700 chlorophyll pair to the spectroscopically characterized acceptors A0, A1, FX, FA and FB in turn. Oxidized P700 is reduced on the lumenal side of the thylakoid membrane by plastocyanin or cytochrome c6. The protein is Photosystem I P700 chlorophyll a apoprotein A2 of Pyropia yezoensis (Susabi-nori).